The following is an 86-amino-acid chain: MGSLRVSTFAVAVVVCLSILLMSPTDGRRVCDSAAGLCSMLFSCNTQCNSLGRNFTGGECSDARFPGLSVCYCCHNVESSAEMESM.

An N-terminal signal peptide occupies residues 1–27 (MGSLRVSTFAVAVVVCLSILLMSPTDG). 4 disulfides stabilise this stretch: C31–C74, C38–C60, C44–C71, and C48–C73.

It belongs to the DEFL family.

It is found in the secreted. In Arabidopsis thaliana (Mouse-ear cress), this protein is Defensin-like protein 97 (LCR85).